Reading from the N-terminus, the 785-residue chain is Polyribonucleotide nucleotidyltransferase (785 aa).

The Mg(2+) site is built by Asp516 and Asp522. The 60-residue stretch at 582 to 641 (PRVTTVKIPVDKIGMVIGPKGQTINAIQDETGAEISIEDDGTIYVGATNGPAAQAAVERI) folds into the KH domain. Residues 653–722 (GDRFLGTVVK…QRGKIYLDKV (70 aa)) form the S1 motif domain. The segment at 722 to 785 (VRPEGAEAPA…SRPRRRTRRS (64 aa)) is disordered. A compositionally biased stretch (basic and acidic residues) spans 734 to 764 (AAERPAGRDRGDRGPRDRGDRGGRGPDRGDS).

Belongs to the polyribonucleotide nucleotidyltransferase family. Mg(2+) is required as a cofactor.

The protein localises to the cytoplasm. It carries out the reaction RNA(n+1) + phosphate = RNA(n) + a ribonucleoside 5'-diphosphate. Functionally, involved in mRNA degradation. Catalyzes the phosphorolysis of single-stranded polyribonucleotides processively in the 3'- to 5'-direction. This chain is Polyribonucleotide nucleotidyltransferase, found in Salinispora tropica (strain ATCC BAA-916 / DSM 44818 / JCM 13857 / NBRC 105044 / CNB-440).